We begin with the raw amino-acid sequence, 103 residues long: uncharacterized protein (103 aa).

An N-terminal signal peptide occupies residues 1–13 (MLLSSIVSFVADA). Residue asparagine 67 is glycosylated (N-linked (GlcNAc...) asparagine). The segment at 73-103 (LSSDSNRNIIDNSNNNQHPSSSSTSTSWKKF) is disordered.

It is found in the secreted. This is an uncharacterized protein from Dictyostelium discoideum (Social amoeba).